The sequence spans 404 residues: Probable tRNA sulfurtransferase (404 aa).

Residues 60–165 (QPIVEALKLV…DEAAYISYEE (106 aa)) enclose the THUMP domain. ATP-binding positions include 183-184 (ML), 208-209 (HF), R265, G287, and Q296.

This sequence belongs to the ThiI family.

The protein resides in the cytoplasm. It carries out the reaction [ThiI sulfur-carrier protein]-S-sulfanyl-L-cysteine + a uridine in tRNA + 2 reduced [2Fe-2S]-[ferredoxin] + ATP + H(+) = [ThiI sulfur-carrier protein]-L-cysteine + a 4-thiouridine in tRNA + 2 oxidized [2Fe-2S]-[ferredoxin] + AMP + diphosphate. The enzyme catalyses [ThiS sulfur-carrier protein]-C-terminal Gly-Gly-AMP + S-sulfanyl-L-cysteinyl-[cysteine desulfurase] + AH2 = [ThiS sulfur-carrier protein]-C-terminal-Gly-aminoethanethioate + L-cysteinyl-[cysteine desulfurase] + A + AMP + 2 H(+). Its pathway is cofactor biosynthesis; thiamine diphosphate biosynthesis. Its function is as follows. Catalyzes the ATP-dependent transfer of a sulfur to tRNA to produce 4-thiouridine in position 8 of tRNAs, which functions as a near-UV photosensor. Also catalyzes the transfer of sulfur to the sulfur carrier protein ThiS, forming ThiS-thiocarboxylate. This is a step in the synthesis of thiazole, in the thiamine biosynthesis pathway. The sulfur is donated as persulfide by IscS. This Streptococcus pyogenes serotype M12 (strain MGAS2096) protein is Probable tRNA sulfurtransferase.